The primary structure comprises 324 residues: NADH-ubiquinone oxidoreductase chain 1 (324 aa).

Transmembrane regions (helical) follow at residues V9–L29, F75–M95, L106–G126, I146–F166, S177–A197, I237–L257, E259–V279, and F299–G319.

The protein belongs to the complex I subunit 1 family.

The protein localises to the mitochondrion inner membrane. It catalyses the reaction a ubiquinone + NADH + 5 H(+)(in) = a ubiquinol + NAD(+) + 4 H(+)(out). In terms of biological role, core subunit of the mitochondrial membrane respiratory chain NADH dehydrogenase (Complex I) that is believed to belong to the minimal assembly required for catalysis. Complex I functions in the transfer of electrons from NADH to the respiratory chain. The immediate electron acceptor for the enzyme is believed to be ubiquinone. This chain is NADH-ubiquinone oxidoreductase chain 1 (MT-ND1), found in Thymallus arcticus (Arctic grayling).